Here is a 162-residue protein sequence, read N- to C-terminus: Peptidyl-prolyl cis-trans isomerase-like 1 (162 aa).

In terms of domain architecture, PPIase cyclophilin-type spans 1–155 (MTTNIVLETT…EEVKIVKARV (155 aa)).

The protein belongs to the cyclophilin-type PPIase family. PPIL1 subfamily.

The enzyme catalyses [protein]-peptidylproline (omega=180) = [protein]-peptidylproline (omega=0). PPIases accelerate the folding of proteins. It catalyzes the cis-trans isomerization of proline imidic peptide bonds in oligopeptides. The chain is Peptidyl-prolyl cis-trans isomerase-like 1 (CYP1) from Gibberella zeae (strain ATCC MYA-4620 / CBS 123657 / FGSC 9075 / NRRL 31084 / PH-1) (Wheat head blight fungus).